The primary structure comprises 370 residues: Chorismate synthase (370 aa).

Arginine 47 serves as a coordination point for NADP(+). FMN is bound by residues 124–126 (RSS), glycine 286, 301–305 (KPTAT), and arginine 327.

Belongs to the chorismate synthase family. In terms of assembly, homotetramer. Requires FMNH2 as cofactor.

It catalyses the reaction 5-O-(1-carboxyvinyl)-3-phosphoshikimate = chorismate + phosphate. It functions in the pathway metabolic intermediate biosynthesis; chorismate biosynthesis; chorismate from D-erythrose 4-phosphate and phosphoenolpyruvate: step 7/7. Its function is as follows. Catalyzes the anti-1,4-elimination of the C-3 phosphate and the C-6 proR hydrogen from 5-enolpyruvylshikimate-3-phosphate (EPSP) to yield chorismate, which is the branch point compound that serves as the starting substrate for the three terminal pathways of aromatic amino acid biosynthesis. This reaction introduces a second double bond into the aromatic ring system. This Trichodesmium erythraeum (strain IMS101) protein is Chorismate synthase.